Consider the following 345-residue polypeptide: Ribosome production factor 1 (345 aa).

Disordered stretches follow at residues Met1 to Ile57 and Trp70 to Ile105. Residues Arg87 to Pro97 are compositionally biased toward basic and acidic residues. Positions Pro142 to Asp325 constitute a Brix domain. Residues Val303 to Gln320 form an RNA-binding region.

Its subcellular location is the nucleus. The protein resides in the nucleolus. Its function is as follows. May be required for ribosome biogenesis. The sequence is that of Ribosome production factor 1 (Rpf1) from Rattus norvegicus (Rat).